A 66-amino-acid chain; its full sequence is Large ribosomal subunit protein bL28 (66 aa).

The interval 1-26 (MAKDAITGARTRFGNQRSHALNSSRR) is disordered. The segment covering 13–25 (FGNQRSHALNSSR) has biased composition (polar residues).

This sequence belongs to the bacterial ribosomal protein bL28 family.

This chain is Large ribosomal subunit protein bL28, found in Leuconostoc citreum (strain KM20).